The chain runs to 146 residues: MORN repeat-containing protein 4 (146 aa).

4 MORN repeats span residues 16-38, 39-61, 62-84, and 85-107; these read YRGEWKEGRRHGFGQLVFADGGT, YLGHFENGLFNGFGVLTFSDGSR, YEGEFSQGKFNGVGVFIRYDNMT, and FEGEFKNGRVDGFGLLTFPDGSH.

As to quaternary structure, interacts with MYO3A.

Its subcellular location is the cytoplasm. The protein resides in the cell projection. It localises to the filopodium tip. It is found in the stereocilium. Its function is as follows. Plays a role in promoting axonal degeneration following neuronal injury by toxic insult or trauma. This Mus musculus (Mouse) protein is MORN repeat-containing protein 4 (Morn4).